The following is a 519-amino-acid chain: MAEKPKKSQKLRARLPRGLADRGPAELAATRAMVETIRAVYERYGFEPVETPAFEFTDALGKFLPDQDRPNEGVFSFQDDDEQWISLRYDLTAPLARYVAENFDSLPKPYRSYRNGYVYRNEKPGPGRFRQFMQFDADTVGSASPAADAEMCMMAADAMEALGIPRGSYVVKVNNRKVLDGVMESIGLGGEENAGRRLTVLRAIDKLDRLGIEGVKLLLGEGRWDGGEQGKGDFTIGAQLSPETSTPILNYLDLGIRVARDRVESPNRELGIVGYLEQIVSGSETGAQGTTELAQIVRLVEAAGYDDGRIRIDPSVVRGLEYYTGPVYEVELLLDTKDEKGRPVRFGSVGGGGRYDGLVSRFRGEPVPATGFSIGVSRLQAALTLLGKLDTRPQAGPVVVTVFDRDRVADYQKMVARLRAENIRAELYLGNPKNMGNQLKYADKRNSPCVIIQGSDEKNDPDGAQIIVKDLVLGAELASLEKDREEYLQKQAEAQRKVPEADLVDEVRRILAKHSVRWS.

It belongs to the class-II aminoacyl-tRNA synthetase family. As to quaternary structure, homodimer.

The protein resides in the cytoplasm. It catalyses the reaction tRNA(His) + L-histidine + ATP = L-histidyl-tRNA(His) + AMP + diphosphate + H(+). This is Histidine--tRNA ligase from Rhodopseudomonas palustris (strain BisB18).